The following is a 189-amino-acid chain: Sec-independent protein translocase protein TatB (189 aa).

Residues 1-21 (MFGVGIFEVLVILIVAVIALG) form a helical membrane-spanning segment. The tract at residues 152–189 (TQKPQNSIDSINSKESSVDSLHSPSIVESTQSSSSKDS) is disordered. Over residues 153–189 (QKPQNSIDSINSKESSVDSLHSPSIVESTQSSSSKDS) the composition is skewed to polar residues.

The protein belongs to the TatB family. The Tat system comprises two distinct complexes: a TatABC complex, containing multiple copies of TatA, TatB and TatC subunits, and a separate TatA complex, containing only TatA subunits. Substrates initially bind to the TatABC complex, which probably triggers association of the separate TatA complex to form the active translocon.

The protein resides in the cell inner membrane. In terms of biological role, part of the twin-arginine translocation (Tat) system that transports large folded proteins containing a characteristic twin-arginine motif in their signal peptide across membranes. Together with TatC, TatB is part of a receptor directly interacting with Tat signal peptides. TatB may form an oligomeric binding site that transiently accommodates folded Tat precursor proteins before their translocation. In Helicobacter hepaticus (strain ATCC 51449 / 3B1), this protein is Sec-independent protein translocase protein TatB.